The chain runs to 142 residues: Large ribosomal subunit protein uL13 (142 aa).

The protein belongs to the universal ribosomal protein uL13 family. In terms of assembly, part of the 50S ribosomal subunit.

In terms of biological role, this protein is one of the early assembly proteins of the 50S ribosomal subunit, although it is not seen to bind rRNA by itself. It is important during the early stages of 50S assembly. This Shigella boydii serotype 18 (strain CDC 3083-94 / BS512) protein is Large ribosomal subunit protein uL13.